The following is a 795-amino-acid chain: Serine/threonine-protein kinase MARK1 (795 aa).

The tract at residues 1-41 is disordered; it reads MSARTPLPTVNERDTENHTSVDGYTETHIPPAKSSSRQNLP. Phosphothreonine is present on Thr5. Residues 60–311 enclose the Protein kinase domain; the sequence is YRLQKTIGKG…LEQIMKDRWM (252 aa). ATP contacts are provided by residues 66 to 74 and Lys89; that span reads IGKGNFAKV. Asp182 acts as the Proton acceptor in catalysis. Thr208 is modified (phosphothreonine). A Phosphothreonine; by LKB1 and TAOK1 modification is found at Thr215. Ser219 bears the Phosphoserine; by GSK3-beta mark. Positions 329–370 constitute a UBA domain; sequence DLSDAKRIDIMVTMGFARDEINDALVSQKYDEVMATYILLGR. 2 disordered regions span residues 377–498 and 518–699; these read GGES…SGGS and QNGR…KPRS. Residues Ser382, Ser390, Ser393, Ser403, Ser423, and Ser444 each carry the phosphoserine modification. Polar residues predominate over residues 387 to 403; it reads CQRSRPSSDLNNSTLQS. Residues 447–459 are compositionally biased toward basic and acidic residues; the sequence is SEQKEEWGKDTAR. The segment covering 462–473 has biased composition (polar residues); that stretch reads GSTTVGSKSEVT. Phosphoserine is present on Ser475. Over residues 486 to 495 the composition is skewed to polar residues; that stretch reads TASPSNNVYS. Composition is skewed to low complexity over residues 523 to 547 and 585 to 599; these read SSLT…GPSA and PAAS…ASTP. At Ser588 the chain carries Phosphoserine. Thr613 bears the Phosphothreonine; by PKC/PRKCZ mark. The span at 647–657 shows a compositional bias: polar residues; it reads GTSTGIISKIT. 2 stretches are compositionally biased toward basic and acidic residues: residues 661–676 and 683–697; these read VRRD…RADT and DPKE…EAKP. Ser666 is subject to Phosphoserine. One can recognise a KA1 domain in the interval 746–795; the sequence is DARQDSLVQWEMEVCKLPRLSLNGVRFKRISGTSIAFKNIASKIANELKL.

It belongs to the protein kinase superfamily. CAMK Ser/Thr protein kinase family. SNF1 subfamily. As to quaternary structure, interacts with MAPT/TAU. The cofactor is Mg(2+). Phosphorylated at Thr-215 by STK11/LKB1 in complex with STE20-related adapter-alpha (STRADA) pseudo kinase and CAB39. Phosphorylation at Thr-215 by TAOK1 activates the kinase activity, leading to phosphorylation and detachment of MAPT/TAU from microtubules. Phosphorylation at Ser-219 by GSK3-beta (GSK3B) inhibits the kinase activity. Phosphorylation at Thr-613 by PRKCZ/aPKC in polarized epithelial cells inhibits the kinase activity.

The protein resides in the cell membrane. It is found in the cytoplasm. It localises to the cytoskeleton. The protein localises to the cell projection. Its subcellular location is the dendrite. It carries out the reaction L-seryl-[protein] + ATP = O-phospho-L-seryl-[protein] + ADP + H(+). The catalysed reaction is L-threonyl-[protein] + ATP = O-phospho-L-threonyl-[protein] + ADP + H(+). The enzyme catalyses L-seryl-[tau protein] + ATP = O-phospho-L-seryl-[tau protein] + ADP + H(+). It catalyses the reaction L-threonyl-[tau protein] + ATP = O-phospho-L-threonyl-[tau protein] + ADP + H(+). Its activity is regulated as follows. Inhibited by phosphorylation at Ser-219. Activated by phosphorylation on Thr-215. Its function is as follows. Serine/threonine-protein kinase. Involved in cell polarity and microtubule dynamics regulation. Phosphorylates DCX, MAP2 and MAP4. Phosphorylates the microtubule-associated protein MAPT/TAU. Involved in cell polarity by phosphorylating the microtubule-associated proteins MAP2, MAP4 and MAPT/TAU at KXGS motifs, causing detachment from microtubules, and their disassembly. Involved in the regulation of neuronal migration through its dual activities in regulating cellular polarity and microtubule dynamics, possibly by phosphorylating and regulating DCX. Also acts as a positive regulator of the Wnt signaling pathway, probably by mediating phosphorylation of dishevelled proteins (DVL1, DVL2 and/or DVL3). The sequence is that of Serine/threonine-protein kinase MARK1 from Mus musculus (Mouse).